A 315-amino-acid chain; its full sequence is Calumenin (315 aa).

A signal peptide spans 1-19; the sequence is MDLRQFLMCLSLCTAFALS. At serine 44 the chain carries Phosphoserine. Residue tyrosine 47 is modified to Phosphotyrosine. A Phosphothreonine modification is found at threonine 65. 6 consecutive EF-hand domains span residues 68-103, 104-139, 151-186, 188-223, 229-264, and 265-300; these read ESKE…AQKR, WIYE…YVLD, QMMV…EEYD, MKDI…HDGN, WVKT…SDYD, and HAEA…FVGS. Serine 69 is subject to Phosphoserine; by FAM20C. Aspartate 81, aspartate 83, aspartate 85, glutamate 92, aspartate 117, asparagine 119, aspartate 121, and glutamate 128 together coordinate Ca(2+). Residue asparagine 131 is glycosylated (N-linked (GlcNAc...) (complex) asparagine). Aspartate 164 contributes to the Ca(2+) binding site. The residue at position 165 (lysine 165) is an N6-acetyllysine. Ca(2+)-binding residues include aspartate 166, aspartate 168, glutamate 175, aspartate 201, asparagine 203, aspartate 205, glutamate 212, aspartate 242, asparagine 244, aspartate 246, lysine 248, and glutamate 253. Phosphothreonine is present on threonine 254. Phosphoserine occurs at positions 261 and 277. Ca(2+)-binding residues include aspartate 278, asparagine 280, aspartate 282, lysine 284, and glutamate 289. Residues 312 to 315 carry the Prevents secretion from ER motif; the sequence is HDEF.

This sequence belongs to the CREC family. Interacts with GGCX. As to expression, ubiquitously expressed. Expressed at high levels in heart, placenta and skeletal muscle, at lower levels in lung, kidney and pancreas and at very low levels in brain and liver.

It localises to the endoplasmic reticulum membrane. Its subcellular location is the golgi apparatus. The protein localises to the secreted. The protein resides in the melanosome. It is found in the sarcoplasmic reticulum lumen. Functionally, involved in regulation of vitamin K-dependent carboxylation of multiple N-terminal glutamate residues. Seems to inhibit gamma-carboxylase GGCX. Binds 7 calcium ions with a low affinity. The polypeptide is Calumenin (CALU) (Homo sapiens (Human)).